The sequence spans 173 residues: Large ribosomal subunit protein uL16 (173 aa).

The protein belongs to the universal ribosomal protein uL16 family.

This chain is Large ribosomal subunit protein uL16, found in Methanosarcina acetivorans (strain ATCC 35395 / DSM 2834 / JCM 12185 / C2A).